We begin with the raw amino-acid sequence, 170 residues long: J domain-containing protein (170 aa).

Residues 17 to 82 (DYYALLGCDE…SKRALYDKWR (66 aa)) form the J domain. A disordered region spans residues 101–170 (QQSMHWSKPN…VLSKFRNYEI (70 aa)). Over residues 110 to 120 (NTKDRMLEGDG) the composition is skewed to basic and acidic residues. Low complexity predominate over residues 121–134 (SKPSGPSSLGPSNP).

The sequence is that of J domain-containing protein (jdp) from Bombyx mori (Silk moth).